A 261-amino-acid polypeptide reads, in one-letter code: DNA repair protein RecO (261 aa).

This sequence belongs to the RecO family.

Functionally, involved in DNA repair and RecF pathway recombination. The protein is DNA repair protein RecO of Pelodictyon phaeoclathratiforme (strain DSM 5477 / BU-1).